A 228-amino-acid chain; its full sequence is Translin (228 aa).

The segment at 86–90 is DNA/RNA binding; sequence RFHEH. Positions 177–198 are leucine-zipper; it reads LDSGFRLLNLKNDSLRKRYDGL. Position 187 is an N6-acetyllysine (K187). Residue S190 is modified to Phosphoserine. The residue at position 199 (K199) is an N6-acetyllysine.

The protein belongs to the translin family. Ring-shaped heterooctamer of six TSN and two TSNAX subunits, DNA/RNA binding occurs inside the ring.

Its subcellular location is the cytoplasm. The protein localises to the nucleus. In terms of biological role, DNA-binding protein that specifically recognizes consensus sequences at the breakpoint junctions in chromosomal translocations, mostly involving immunoglobulin (Ig)/T-cell receptor gene segments. Seems to recognize single-stranded DNA ends generated by staggered breaks occurring at recombination hot spots. Its function is as follows. Exhibits both single-stranded and double-stranded endoribonuclease activity. May act as an activator of RNA-induced silencing complex (RISC) by facilitating endonucleolytic cleavage of the siRNA passenger strand. This chain is Translin, found in Homo sapiens (Human).